The chain runs to 1572 residues: Dynein axonemal assembly factor 8 (1572 aa).

Disordered regions lie at residues 1 to 21, 262 to 304, 324 to 428, and 849 to 871; these read MASE…NWSG, SEEV…HPQS, SLEQ…EILQ, and FQNP…SDSE. Positions 324–335 are enriched in polar residues; it reads SLEQNPENPSQR. Positions 336–351 are enriched in basic and acidic residues; it reads NEQKEKHHLNKTDHTG. Residues 361 to 374 are compositionally biased toward polar residues; it reads NIQNDSLSDANMSN. Residues 409–426 show a composition bias toward basic and acidic residues; that stretch reads VGREEKDGREEQEKEKEI. Residues 849 to 865 are compositionally biased toward polar residues; sequence FQNPYSRSTQPRSANLR. Residues 1249 to 1382 are NDK; that stretch reads TVLLLKPRIW…IRDIKTFFPE (134 aa).

As to quaternary structure, interacts with DNAI2. Expression is enriched in multiciliated cells in the epidermis and the nephrostomes of the pronephros.

It is found in the dynein axonemal particle. It localises to the cytoplasm. Its function is as follows. In cyliated cells, dynein axonemal particle-specific protein required for deployment of ODA to the axoneme. Interacts with outer dynein arm (ODA) subunits. The polypeptide is Dynein axonemal assembly factor 8 (dnaaf8) (Xenopus laevis (African clawed frog)).